A 775-amino-acid chain; its full sequence is Beta-galactosidase 7 (775 aa).

The first 17 residues, 1-17 (MRGGMAITAALVVVAAA), serve as a signal peptide directing secretion. Residue Glu-185 is the Proton donor of the active site. Glu-256 acts as the Nucleophile in catalysis. N-linked (GlcNAc...) asparagine glycosylation is found at Asn-257, Asn-266, Asn-277, Asn-358, and Asn-602. The SUEL-type lectin domain maps to 689–775 (RGKVPKVRIW…KSLLVVADCR (87 aa)).

Belongs to the glycosyl hydrolase 35 family.

The protein resides in the secreted. Its subcellular location is the extracellular space. It is found in the apoplast. The enzyme catalyses Hydrolysis of terminal non-reducing beta-D-galactose residues in beta-D-galactosides.. This Oryza sativa subsp. japonica (Rice) protein is Beta-galactosidase 7.